The following is a 393-amino-acid chain: Phosphoglycerate kinase (393 aa).

Residues 21-23, arginine 36, 59-62, arginine 113, and arginine 146 contribute to the substrate site; these read DLN and HLGR. ATP-binding positions include lysine 197, glutamate 319, and 345-348; that span reads GGDT.

The protein belongs to the phosphoglycerate kinase family. Monomer.

The protein localises to the cytoplasm. The enzyme catalyses (2R)-3-phosphoglycerate + ATP = (2R)-3-phospho-glyceroyl phosphate + ADP. Its pathway is carbohydrate degradation; glycolysis; pyruvate from D-glyceraldehyde 3-phosphate: step 2/5. In Nitratidesulfovibrio vulgaris (strain DSM 19637 / Miyazaki F) (Desulfovibrio vulgaris), this protein is Phosphoglycerate kinase.